The following is a 316-amino-acid chain: Sulfate adenylyltransferase subunit 2 (316 aa).

Residues 297 to 316 are disordered; the sequence is RAIDRDQSGSMEKKKREGYF.

It belongs to the PAPS reductase family. CysD subfamily. As to quaternary structure, heterodimer composed of CysD, the smaller subunit, and CysN.

It carries out the reaction sulfate + ATP + H(+) = adenosine 5'-phosphosulfate + diphosphate. The protein operates within sulfur metabolism; hydrogen sulfide biosynthesis; sulfite from sulfate: step 1/3. Its function is as follows. With CysN forms the ATP sulfurylase (ATPS) that catalyzes the adenylation of sulfate producing adenosine 5'-phosphosulfate (APS) and diphosphate, the first enzymatic step in sulfur assimilation pathway. APS synthesis involves the formation of a high-energy phosphoric-sulfuric acid anhydride bond driven by GTP hydrolysis by CysN coupled to ATP hydrolysis by CysD. This Allorhizobium ampelinum (strain ATCC BAA-846 / DSM 112012 / S4) (Agrobacterium vitis (strain S4)) protein is Sulfate adenylyltransferase subunit 2.